Consider the following 77-residue polypeptide: Large ribosomal subunit protein uL24 (77 aa).

The protein belongs to the universal ribosomal protein uL24 family. Part of the 50S ribosomal subunit.

Its function is as follows. One of two assembly initiator proteins, it binds directly to the 5'-end of the 23S rRNA, where it nucleates assembly of the 50S subunit. In terms of biological role, one of the proteins that surrounds the polypeptide exit tunnel on the outside of the subunit. This chain is Large ribosomal subunit protein uL24, found in Campylobacter jejuni subsp. jejuni serotype O:6 (strain 81116 / NCTC 11828).